The chain runs to 180 residues: Large ribosomal subunit protein uL18m (180 aa).

The protein belongs to the universal ribosomal protein uL18 family. Component of the mitochondrial ribosome large subunit (39S) which comprises a 16S rRNA and about 50 distinct proteins.

It is found in the mitochondrion. Together with thiosulfate sulfurtransferase (TST), acts as a mitochondrial import factor for the cytosolic 5S rRNA. The precursor form shows RNA chaperone activity; is able to fold the 5S rRNA into an import-competent conformation that is recognized by rhodanese (TST). Both the cytoplasmic and mitochondrial forms are able to bind to the helix IV-loop D in the gamma domain of the 5S rRNA. In Mus musculus (Mouse), this protein is Large ribosomal subunit protein uL18m (Mrpl18).